The chain runs to 420 residues: O-methyltransferase opaF (420 aa).

Residues 262–263 (GG), D287, and 308–309 (DL) each bind S-adenosyl-L-methionine. H328 acts as the Proton acceptor in catalysis.

It belongs to the class I-like SAM-binding methyltransferase superfamily. Cation-independent O-methyltransferase family.

It participates in secondary metabolite biosynthesis. In terms of biological role, O-methyltransferase; part of the gene cluster that mediates the biosynthesis of oxepinamides, derivatives of anthranilyl-containing tripeptides that share an oxepin ring and a fused pyrimidinone moiety. The nonribosomal peptide synthetase (NRPS) opaA assembles the quinazolinone core with D-Phe incorporation. The first adenylation domain (A1) of opaA loads and activates anthranilic acid whereas the second A domain (A2) is for activating of L-Phe, which is then converted to D-form by the E domain. The third A domain (A3) is responsible for L-Ile activation and the terminal condensation domain C3 for cyclization and releasing the NRPS product protuboxepin K. The cytochrome P450 monooxygenase opaB then catalyzes alone the oxepin ring formation to convert protuboxepin K into protuboxepin A. The flavoenzyme opaC installs subsequently one hydroxyl group at the oxepin ring, accompanied by double bond migration, to form 15-epi-oxepinamide E. The epimerase opaE changes the D-Phe residue back to L-form, leading to oxepinamide E, which is further methylated at the hydroxyl group at C-12 by the O-methyltransferase OpaF to yield oxepinamide F. This Aspergillus ustus protein is O-methyltransferase opaF.